Consider the following 247-residue polypeptide: Probable transcriptional regulatory protein Syncc9605_2132 (247 aa).

Belongs to the TACO1 family.

The protein resides in the cytoplasm. In Synechococcus sp. (strain CC9605), this protein is Probable transcriptional regulatory protein Syncc9605_2132.